Consider the following 549-residue polypeptide: Sorting nexin-33 (549 aa).

One can recognise an SH3 domain in the interval 1 to 61 (MALKARALYS…PASYVEILRP (61 aa)). The segment covering 66-83 (VQVDYSGHTQGYTDSPHQ) has biased composition (polar residues). The interval 66–137 (VQVDYSGHTQ…RPEYTHRPRP (72 aa)) is disordered. Acidic residues predominate over residues 86–101 (YDDDEEDDDDWDDWDD). Residues 110–119 (SGSNGVSRSQ) are compositionally biased toward polar residues. Positions 127–137 (PRPEYTHRPRP) are enriched in basic and acidic residues. A PX domain is found at 205 to 315 (FSCSVEEPTK…HFLSCQDEKQ (111 aa)). In terms of domain architecture, BAR spans 346–549 (LQDVEERVDV…EKTLHMYDDL (204 aa)).

It belongs to the sorting nexin family.

It is found in the cytoplasm. Its subcellular location is the cytosol. The protein resides in the membrane. The protein localises to the cytoplasmic vesicle membrane. In terms of biological role, plays a role in the reorganization of the cytoskeleton, endocytosis and cellular vesicle trafficking, both during interphase and at the end of mitotic cell divisions. Required for efficient progress through mitosis and cytokinesis. Required for normal formation of the cleavage furrow at the end of mitosis. Modulates endocytosis of cell-surface proteins. Promotes membrane tubulation (in vitro). May promote the formation of macropinosomes. This chain is Sorting nexin-33 (snx33), found in Xenopus tropicalis (Western clawed frog).